The sequence spans 79 residues: Large ribosomal subunit protein uL30 (79 aa).

Belongs to the universal ribosomal protein uL30 family. In terms of assembly, part of the 50S ribosomal subunit.

This chain is Large ribosomal subunit protein uL30, found in Anaeromyxobacter sp. (strain Fw109-5).